A 555-amino-acid polypeptide reads, in one-letter code: Putative ankyrin repeat protein L283 (555 aa).

4 ANK repeats span residues 364–389 (TKVNNIHQFIQKDEFKSAQKLLEDDI), 390–420 (VFKKVVDTAIKSNNQKTIKYLIDQQQFDINE), 422–447 (IKLALEENKLDIFNMLRLFNFDKVRC), and 455–488 (GYLEIVDKMMENDFEKINGDLVNIVLRNAAEGGK).

The sequence is that of Putative ankyrin repeat protein L283 from Acanthamoeba polyphaga mimivirus (APMV).